A 316-amino-acid chain; its full sequence is Ribosomal RNA small subunit methyltransferase H (316 aa).

S-adenosyl-L-methionine-binding positions include 35–37 (GGH), aspartate 55, phenylalanine 79, aspartate 101, and glutamine 108. Residues 291–316 (AIKPSKDEVDENTRSRSSVLRIAEKL) form a disordered region. Over residues 294 to 304 (PSKDEVDENTR) the composition is skewed to basic and acidic residues.

The protein belongs to the methyltransferase superfamily. RsmH family.

The protein resides in the cytoplasm. The catalysed reaction is cytidine(1402) in 16S rRNA + S-adenosyl-L-methionine = N(4)-methylcytidine(1402) in 16S rRNA + S-adenosyl-L-homocysteine + H(+). Its function is as follows. Specifically methylates the N4 position of cytidine in position 1402 (C1402) of 16S rRNA. In Vibrio atlanticus (strain LGP32) (Vibrio splendidus (strain Mel32)), this protein is Ribosomal RNA small subunit methyltransferase H.